A 101-amino-acid chain; its full sequence is Protein S100-A7A (101 aa).

2 EF-hand domains span residues Met13–Asp48 and Lys50–Asp85. Zn(2+) is bound by residues His18, Glu28, and Glu38. Ca(2+) contacts are provided by Asp63 and Asn65. Glu66 lines the Zn(2+) pocket. The Ca(2+) site is built by Asp67, Lys69, and Glu74. Positions 87 and 91 each coordinate Zn(2+).

This sequence belongs to the S-100 family. Overexpressed in psoriasis.

It is found in the cytoplasm. Functionally, may be involved in epidermal differentiation and inflammation and might therefore be important for the pathogenesis of psoriasis and other diseases. This is Protein S100-A7A (S100A7A) from Homo sapiens (Human).